The primary structure comprises 416 residues: Serine hydroxymethyltransferase (416 aa).

(6S)-5,6,7,8-tetrahydrofolate contacts are provided by residues Leu118 and Gly122–Leu124. Lys226 bears the N6-(pyridoxal phosphate)lysine mark. (6S)-5,6,7,8-tetrahydrofolate contacts are provided by residues Glu242 and Ser350–Phe352.

This sequence belongs to the SHMT family. As to quaternary structure, homodimer. It depends on pyridoxal 5'-phosphate as a cofactor.

Its subcellular location is the cytoplasm. The enzyme catalyses (6R)-5,10-methylene-5,6,7,8-tetrahydrofolate + glycine + H2O = (6S)-5,6,7,8-tetrahydrofolate + L-serine. It participates in one-carbon metabolism; tetrahydrofolate interconversion. Its pathway is amino-acid biosynthesis; glycine biosynthesis; glycine from L-serine: step 1/1. In terms of biological role, catalyzes the reversible interconversion of serine and glycine with tetrahydrofolate (THF) serving as the one-carbon carrier. This reaction serves as the major source of one-carbon groups required for the biosynthesis of purines, thymidylate, methionine, and other important biomolecules. Also exhibits THF-independent aldolase activity toward beta-hydroxyamino acids, producing glycine and aldehydes, via a retro-aldol mechanism. This is Serine hydroxymethyltransferase from Helicobacter pylori (strain ATCC 700392 / 26695) (Campylobacter pylori).